A 306-amino-acid chain; its full sequence is Glutaminase (306 aa).

The substrate site is built by Ser64, Asn115, Glu159, Asn166, Tyr190, Tyr242, and Val260.

The protein belongs to the glutaminase family. In terms of assembly, homotetramer.

The enzyme catalyses L-glutamine + H2O = L-glutamate + NH4(+). In Vibrio vulnificus (strain YJ016), this protein is Glutaminase.